Reading from the N-terminus, the 404-residue chain is Metacaspase-1A (404 aa).

The segment covering 1 to 10 (MNPHHSHHHS) has biased composition (basic residues). Residues 1-100 (MNPHHSHHHS…PSDPVSFGQG (100 aa)) form a disordered region. A compositionally biased stretch (low complexity) spans 24-51 (QQQPPSNPYQYNQPSPQPYQGSQPPQNG). Active-site residues include His-200 and Cys-256.

It belongs to the peptidase C14B family.

Functionally, involved in cell death (apoptosis). This chain is Metacaspase-1A (casA), found in Aspergillus niger (strain ATCC MYA-4892 / CBS 513.88 / FGSC A1513).